The chain runs to 591 residues: ESX-1 secretion system protein EccCb1 (591 aa).

2 consecutive FtsK domains span residues 65–259 (LQDV…NETQ) and 359–545 (LTPA…EKQE). ATP-binding positions include 84-91 (GAPQTGKS) and 376-383 (GAAKSGKT).

As to quaternary structure, part of the ESX-1 / type VII secretion system (T7SS), which is composed of cytosolic and membrane components. The ESX-1 membrane complex is composed of EccB1, EccCa1, EccCb1, EccD1 and EccE1. Interacts with EccCa1, EspK and the C-terminus of EsxB. Residues 1-261 interact with EsxB and an artificial EsxB-EsxA heterodimer.

The protein resides in the cytoplasm. EsxB binding to the second FtsK domain of EccCb1 causes multimerization; a subsequent unknown step relieves the allosteric inhibition of linker 2 on FtsK domain 1 (in EccCa1 subunit), activating the ATPase activity. Part of the ESX-1 specialized secretion system, which delivers several virulence factors to host cells during infection, including the key virulence factors EsxA (ESAT-6) and EsxB (CFP-10). EccCb1 may link the cytosolic components of the system with the membrane components. In Mycobacterium tuberculosis (strain ATCC 25618 / H37Rv), this protein is ESX-1 secretion system protein EccCb1.